Reading from the N-terminus, the 475-residue chain is Ribulose bisphosphate carboxylase large chain (475 aa).

Positions 1 to 2 (MV) are excised as a propeptide. Position 3 is an N-acetylproline (proline 3). Lysine 14 carries the post-translational modification N6,N6,N6-trimethyllysine. Substrate is bound by residues asparagine 123 and threonine 173. The active-site Proton acceptor is lysine 175. Lysine 177 provides a ligand contact to substrate. Mg(2+) is bound by residues lysine 201, aspartate 203, and glutamate 204. At lysine 201 the chain carries N6-carboxylysine. Histidine 294 serves as the catalytic Proton acceptor. Residues arginine 295, histidine 327, and serine 379 each coordinate substrate.

This sequence belongs to the RuBisCO large chain family. Type I subfamily. In terms of assembly, heterohexadecamer of 8 large chains and 8 small chains. Mg(2+) is required as a cofactor.

It localises to the plastid. The protein resides in the chloroplast. It carries out the reaction 2 (2R)-3-phosphoglycerate + 2 H(+) = D-ribulose 1,5-bisphosphate + CO2 + H2O. It catalyses the reaction D-ribulose 1,5-bisphosphate + O2 = 2-phosphoglycolate + (2R)-3-phosphoglycerate + 2 H(+). In terms of biological role, ruBisCO catalyzes two reactions: the carboxylation of D-ribulose 1,5-bisphosphate, the primary event in carbon dioxide fixation, as well as the oxidative fragmentation of the pentose substrate in the photorespiration process. Both reactions occur simultaneously and in competition at the same active site. This is Ribulose bisphosphate carboxylase large chain from Chlamydomonas moewusii (Chlamydomonas eugametos).